Here is a 349-residue protein sequence, read N- to C-terminus: MTATTATAPAMRGGGRNELPPHLDDNLLTPRFYTTEFDKAAKTDLDIARKDFEAMFKEMEADYNLKHFDRKASLERLADLSPEDKAIYESYLVRSVVSEFSGFLLFKEISNRFKKAGRQELGQFFTFLARDEARHAGFLGRALKAEGINVDLPNLGNKRAPTFFPLSWVLYSLYLSEKIGYWRYILINRHLNDNPEKVCAPLFDFFEPWCQDENRHGDCINLMMRCWPGMTKGFRGKLLSRFFLWSVFLTHTLTVCERGDFYGLLGIDPVLFDEEVIVQTNNTSRNAFPWVYNFDDGKFLEMRMQILKAFRNWRESSGLAKPVALSKFVSLILRQFALPMQKTNAVRYG.

Positions 1–10 (MTATTATAPA) are enriched in low complexity. The interval 1–23 (MTATTATAPAMRGGGRNELPPHL) is disordered.

The protein belongs to the AcsF family. Requires Fe cation as cofactor.

The catalysed reaction is Mg-protoporphyrin IX 13-monomethyl ester + 3 NADPH + 3 O2 + 2 H(+) = 3,8-divinyl protochlorophyllide a + 3 NADP(+) + 5 H2O. It functions in the pathway porphyrin-containing compound metabolism; chlorophyll biosynthesis (light-independent). Functionally, catalyzes the formation of the isocyclic ring in chlorophyll biosynthesis. Mediates the cyclase reaction, which results in the formation of divinylprotochlorophyllide (Pchlide) characteristic of all chlorophylls from magnesium-protoporphyrin IX 13-monomethyl ester (MgPMME). The polypeptide is Magnesium-protoporphyrin IX monomethyl ester [oxidative] cyclase (Prochlorococcus marinus (strain MIT 9303)).